The following is a 337-amino-acid chain: Glyceraldehyde-3-phosphate dehydrogenase (337 aa).

NAD(+)-binding positions include 12–13, aspartate 34, and arginine 79; that span reads RI. D-glyceraldehyde 3-phosphate contacts are provided by residues 150 to 152, threonine 181, 210 to 211, and arginine 233; these read SCT and TG. The active-site Nucleophile is the cysteine 151. Asparagine 315 provides a ligand contact to NAD(+).

Belongs to the glyceraldehyde-3-phosphate dehydrogenase family. Homotetramer.

Its subcellular location is the cytoplasm. The catalysed reaction is D-glyceraldehyde 3-phosphate + phosphate + NAD(+) = (2R)-3-phospho-glyceroyl phosphate + NADH + H(+). It functions in the pathway carbohydrate degradation; glycolysis; pyruvate from D-glyceraldehyde 3-phosphate: step 1/5. This Cryphonectria parasitica (Chestnut blight fungus) protein is Glyceraldehyde-3-phosphate dehydrogenase.